Reading from the N-terminus, the 177-residue chain is Acireductone dioxygenase (177 aa).

His-99, His-101, Glu-105, and His-143 together coordinate Fe(2+). Residues His-99, His-101, Glu-105, and His-143 each contribute to the Ni(2+) site.

This sequence belongs to the acireductone dioxygenase (ARD) family. Monomer. Requires Fe(2+) as cofactor. Ni(2+) serves as cofactor.

The catalysed reaction is 1,2-dihydroxy-5-(methylsulfanyl)pent-1-en-3-one + O2 = 3-(methylsulfanyl)propanoate + CO + formate + 2 H(+). It catalyses the reaction 1,2-dihydroxy-5-(methylsulfanyl)pent-1-en-3-one + O2 = 4-methylsulfanyl-2-oxobutanoate + formate + 2 H(+). Its pathway is amino-acid biosynthesis; L-methionine biosynthesis via salvage pathway; L-methionine from S-methyl-5-thio-alpha-D-ribose 1-phosphate: step 5/6. Catalyzes 2 different reactions between oxygen and the acireductone 1,2-dihydroxy-3-keto-5-methylthiopentene (DHK-MTPene) depending upon the metal bound in the active site. Fe-containing acireductone dioxygenase (Fe-ARD) produces formate and 2-keto-4-methylthiobutyrate (KMTB), the alpha-ketoacid precursor of methionine in the methionine recycle pathway. Ni-containing acireductone dioxygenase (Ni-ARD) produces methylthiopropionate, carbon monoxide and formate, and does not lie on the methionine recycle pathway. This chain is Acireductone dioxygenase, found in Leptospira borgpetersenii serovar Hardjo-bovis (strain L550).